A 432-amino-acid chain; its full sequence is Serine hydroxymethyltransferase (432 aa).

(6S)-5,6,7,8-tetrahydrofolate is bound by residues leucine 127 and glycine 131–leucine 133. Lysine 236 is modified (N6-(pyridoxal phosphate)lysine).

The protein belongs to the SHMT family. As to quaternary structure, homodimer. It depends on pyridoxal 5'-phosphate as a cofactor.

It is found in the cytoplasm. The catalysed reaction is (6R)-5,10-methylene-5,6,7,8-tetrahydrofolate + glycine + H2O = (6S)-5,6,7,8-tetrahydrofolate + L-serine. Its pathway is one-carbon metabolism; tetrahydrofolate interconversion. It functions in the pathway amino-acid biosynthesis; glycine biosynthesis; glycine from L-serine: step 1/1. Functionally, catalyzes the reversible interconversion of serine and glycine with tetrahydrofolate (THF) serving as the one-carbon carrier. This reaction serves as the major source of one-carbon groups required for the biosynthesis of purines, thymidylate, methionine, and other important biomolecules. Also exhibits THF-independent aldolase activity toward beta-hydroxyamino acids, producing glycine and aldehydes, via a retro-aldol mechanism. This Rhizobium rhizogenes (strain K84 / ATCC BAA-868) (Agrobacterium radiobacter) protein is Serine hydroxymethyltransferase.